We begin with the raw amino-acid sequence, 160 residues long: Dihydrofolate reductase (160 aa).

The 160-residue stretch at 1-160 (MLIAIWAMTQ…NVNYYRKKQQ (160 aa)) folds into the DHFR domain. 5–7 (IWA) provides a ligand contact to substrate. NADP(+) is bound by residues 6-7 (WA) and 14-19 (IGNNNT). Glu-27 provides a ligand contact to substrate. 43–46 (GRKT) serves as a coordination point for NADP(+). Arg-57 contacts substrate. NADP(+)-binding positions include 62–65 (LSKD) and 101–106 (CGGKSV). A substrate-binding site is contributed by Ser-120.

The protein belongs to the dihydrofolate reductase family.

It catalyses the reaction (6S)-5,6,7,8-tetrahydrofolate + NADP(+) = 7,8-dihydrofolate + NADPH + H(+). The protein operates within cofactor biosynthesis; tetrahydrofolate biosynthesis; 5,6,7,8-tetrahydrofolate from 7,8-dihydrofolate: step 1/1. Its function is as follows. Key enzyme in folate metabolism. Catalyzes an essential reaction for de novo glycine and purine synthesis, and for DNA precursor synthesis. This chain is Dihydrofolate reductase (folA), found in Mycoplasma genitalium (strain ATCC 33530 / DSM 19775 / NCTC 10195 / G37) (Mycoplasmoides genitalium).